The following is a 154-amino-acid chain: Metallothiol transferase FosB (154 aa).

A VOC domain is found at 8–123; it reads GINHLLFSVS…DGHKFELHTG (116 aa). Positions 11, 70, and 119 each coordinate Mg(2+). Glutamate 119 acts as the Proton donor/acceptor in catalysis.

It belongs to the fosfomycin resistance protein family. FosB subfamily. Homodimer. Requires Mg(2+) as cofactor.

The protein localises to the cytoplasm. In terms of biological role, metallothiol transferase which confers resistance to fosfomycin by catalyzing the addition of a thiol cofactor to fosfomycin. L-cysteine is probably the physiological thiol donor. In Bacillus licheniformis (strain ATCC 14580 / DSM 13 / JCM 2505 / CCUG 7422 / NBRC 12200 / NCIMB 9375 / NCTC 10341 / NRRL NRS-1264 / Gibson 46), this protein is Metallothiol transferase FosB.